The chain runs to 249 residues: tRNA pseudouridine synthase A (249 aa).

Asp-52 (nucleophile) is an active-site residue. Tyr-111 is a binding site for substrate.

This sequence belongs to the tRNA pseudouridine synthase TruA family. In terms of assembly, homodimer.

It catalyses the reaction uridine(38/39/40) in tRNA = pseudouridine(38/39/40) in tRNA. Functionally, formation of pseudouridine at positions 38, 39 and 40 in the anticodon stem and loop of transfer RNAs. The chain is tRNA pseudouridine synthase A from Brachyspira hyodysenteriae (strain ATCC 49526 / WA1).